The chain runs to 65 residues: MAVQTPRQRLANAKFNKNNEKYRKYGKKKEGKTEKTAPVISKTWLGILLFLLVGGGVLQLISYIL.

The chain crosses the membrane as a helical span at residues 45–65; sequence LGILLFLLVGGGVLQLISYIL.

This sequence belongs to the RAMP4 family.

Its subcellular location is the membrane. It localises to the endoplasmic reticulum membrane. In terms of biological role, interacts with target proteins during their translocation into the lumen of the endoplasmic reticulum. Protects unfolded target proteins against degradation during ER stress. May facilitate glycosylation of target proteins after termination of ER stress. This Saccharomyces cerevisiae (strain ATCC 204508 / S288c) (Baker's yeast) protein is Protein YSY6 (YSY6).